We begin with the raw amino-acid sequence, 37 residues long: Mu-agatoxin-Aa1e (37 aa).

4 disulfide bridges follow: C2–C18, C9–C23, C17–C33, and C25–C31. At N37 the chain carries Asparagine amide.

Belongs to the neurotoxin 07 (Beta/delta-agtx) family. 03 (aga-4) subfamily. Aga sub-subfamily. As to expression, expressed by the venom gland.

The protein resides in the secreted. Its function is as follows. Insecticidal neurotoxin that induces an irreversible spastic paralysis when injected into insects. Modifies presynaptic voltage-gated sodium channels (Nav), causing them to open at the normal resting potential of the nerve. This leads to spontaneous release of neurotransmitter and repetitive action potentials in motor neurons. This Agelenopsis aperta (North American funnel-web spider) protein is Mu-agatoxin-Aa1e.